Reading from the N-terminus, the 382-residue chain is Transcription termination/antitermination protein NusA (382 aa).

One can recognise an S1 motif domain in the interval 135–199 (EDIMTGIVQR…KGPQIMISRT (65 aa)). Residues 301 to 367 (EKTTQVIVPD…TLALDQETAD (67 aa)) enclose the KH domain. Positions 348-382 (LLEDEAASHETLALDQETADQPEATVETSKNHEEE) are disordered.

It belongs to the NusA family. As to quaternary structure, monomer. Binds directly to the core enzyme of the DNA-dependent RNA polymerase and to nascent RNA.

The protein localises to the cytoplasm. In terms of biological role, participates in both transcription termination and antitermination. The polypeptide is Transcription termination/antitermination protein NusA (Halalkalibacterium halodurans (strain ATCC BAA-125 / DSM 18197 / FERM 7344 / JCM 9153 / C-125) (Bacillus halodurans)).